The chain runs to 174 residues: Large ribosomal subunit protein uL10 (174 aa).

This sequence belongs to the universal ribosomal protein uL10 family. As to quaternary structure, part of the ribosomal stalk of the 50S ribosomal subunit. The N-terminus interacts with L11 and the large rRNA to form the base of the stalk. The C-terminus forms an elongated spine to which L12 dimers bind in a sequential fashion forming a multimeric L10(L12)X complex.

Functionally, forms part of the ribosomal stalk, playing a central role in the interaction of the ribosome with GTP-bound translation factors. This Rubrobacter xylanophilus (strain DSM 9941 / JCM 11954 / NBRC 16129 / PRD-1) protein is Large ribosomal subunit protein uL10.